The chain runs to 113 residues: UPF0122 protein M6_Spy0905 (113 aa).

It belongs to the UPF0122 family.

Its function is as follows. Might take part in the signal recognition particle (SRP) pathway. This is inferred from the conservation of its genetic proximity to ftsY/ffh. May be a regulatory protein. In Streptococcus pyogenes serotype M6 (strain ATCC BAA-946 / MGAS10394), this protein is UPF0122 protein M6_Spy0905.